The following is a 185-amino-acid chain: uncharacterized protein (185 aa).

An N-terminal signal peptide occupies residues 1-18; the sequence is MLLKLILILCFLVTLSLS. The interval 30–185 is disordered; that stretch reads TQGPTIASGG…VQDCGEITGW (156 aa). The span at 86-101 shows a compositional bias: basic and acidic residues; that stretch reads RAQEGGKKDTTKEQPK. Residues 103-116 show a composition bias toward low complexity; the sequence is NNNNKNLGRHSSSG. A compositionally biased stretch (gly residues) spans 117-135; it reads SGSGSGSGCGVTGDTGTGS.

The protein localises to the secreted. This is an uncharacterized protein from Dictyostelium discoideum (Social amoeba).